Reading from the N-terminus, the 566-residue chain is Proline--tRNA ligase 1 (566 aa).

It belongs to the class-II aminoacyl-tRNA synthetase family. ProS type 1 subfamily. As to quaternary structure, homodimer.

It localises to the cytoplasm. It catalyses the reaction tRNA(Pro) + L-proline + ATP = L-prolyl-tRNA(Pro) + AMP + diphosphate. Functionally, catalyzes the attachment of proline to tRNA(Pro) in a two-step reaction: proline is first activated by ATP to form Pro-AMP and then transferred to the acceptor end of tRNA(Pro). As ProRS can inadvertently accommodate and process non-cognate amino acids such as alanine and cysteine, to avoid such errors it has two additional distinct editing activities against alanine. One activity is designated as 'pretransfer' editing and involves the tRNA(Pro)-independent hydrolysis of activated Ala-AMP. The other activity is designated 'posttransfer' editing and involves deacylation of mischarged Ala-tRNA(Pro). The misacylated Cys-tRNA(Pro) is not edited by ProRS. The chain is Proline--tRNA ligase 1 from Bacillus cereus (strain ZK / E33L).